The primary structure comprises 465 residues: Cysteine--tRNA ligase 2 (465 aa).

C30 contacts Zn(2+). Residues 32–42 (ITVYDYCHVGH) carry the 'HIGH' region motif. C214, H239, and E243 together coordinate Zn(2+). The short motif at 271–275 (KMSKS) is the 'KMSKS' region element. Residue K274 participates in ATP binding.

This sequence belongs to the class-I aminoacyl-tRNA synthetase family. In terms of assembly, monomer. The cofactor is Zn(2+).

It localises to the cytoplasm. The catalysed reaction is tRNA(Cys) + L-cysteine + ATP = L-cysteinyl-tRNA(Cys) + AMP + diphosphate. The polypeptide is Cysteine--tRNA ligase 2 (Burkholderia lata (strain ATCC 17760 / DSM 23089 / LMG 22485 / NCIMB 9086 / R18194 / 383)).